Here is a 98-residue protein sequence, read N- to C-terminus: ESAT-6-like protein EsxK (98 aa).

This sequence belongs to the WXG100 family. CFP-10 subfamily. As to quaternary structure, strongly interacts with EsxL to form a heterodimeric complex under reducing conditions. The complex is regulated by the redox state of EsxL.

The protein resides in the secreted. The sequence is that of ESAT-6-like protein EsxK from Mycobacterium tuberculosis (strain ATCC 25618 / H37Rv).